The sequence spans 227 residues: ATP synthase subunit a (227 aa).

6 consecutive transmembrane segments (helical) span residues Leu-14–Phe-34, Trp-69–Phe-89, Gln-98–Phe-118, Leu-137–Leu-157, His-169–Leu-189, and Ile-205–Leu-223.

This sequence belongs to the ATPase A chain family. As to quaternary structure, F-type ATPases have 2 components, CF(1) - the catalytic core - and CF(0) - the membrane proton channel. CF(1) has five subunits: alpha(3), beta(3), gamma(1), delta(1), epsilon(1). CF(0) has three main subunits: a, b and c.

It localises to the mitochondrion inner membrane. Functionally, mitochondrial membrane ATP synthase (F(1)F(0) ATP synthase or Complex V) produces ATP from ADP in the presence of a proton gradient across the membrane which is generated by electron transport complexes of the respiratory chain. F-type ATPases consist of two structural domains, F(1) - containing the extramembraneous catalytic core and F(0) - containing the membrane proton channel, linked together by a central stalk and a peripheral stalk. During catalysis, ATP synthesis in the catalytic domain of F(1) is coupled via a rotary mechanism of the central stalk subunits to proton translocation. Key component of the proton channel; it may play a direct role in the translocation of protons across the membrane. This is ATP synthase subunit a (ATP6) from Branchiostoma floridae (Florida lancelet).